Reading from the N-terminus, the 277-residue chain is Putative protein-disulfide oxidoreductase RC0029 (277 aa).

The signal sequence occupies residues 1 to 22 (MRSIFIILIFLLFLSSCSEEKA). The tract at residues 34–80 (EHETQNNETSKATNQEAVNSENTTESIVPANDNNQTDEVSTPASQKQ) is disordered. Over residues 39-80 (NNETSKATNQEAVNSENTTESIVPANDNNQTDEVSTPASQKQ) the composition is skewed to polar residues. A Thioredoxin domain is found at 76 to 265 (ASQKQKNPAI…ISTAVDKALE (190 aa)). Residues Cys-118 and Cys-121 are joined by a disulfide bond.

The protein belongs to the thioredoxin family. DsbA subfamily.

It localises to the periplasm. Its function is as follows. May be required for disulfide bond formation in some proteins. This chain is Putative protein-disulfide oxidoreductase RC0029, found in Rickettsia conorii (strain ATCC VR-613 / Malish 7).